The primary structure comprises 706 residues: Probable serine/threonine-protein kinase zyg-1 (706 aa).

One can recognise a Protein kinase domain in the interval 13 to 249; the sequence is YSHLKEIGKG…LTQIVLSEFM (237 aa). Residues 19 to 27 and K41 contribute to the ATP site; that span reads IGKGGFGVV. The active-site Proton acceptor is D131. Basic and acidic residues-rich tracts occupy residues 261-290 and 323-336; these read SREH…DGRA and FDSE…RDSG. 2 disordered regions span residues 261 to 351 and 566 to 632; these read SREH…NRSQ and SPSS…VAPS. A compositionally biased stretch (low complexity) spans 566–579; sequence SPSSLMPSGSSQTS. Polar residues-rich tracts occupy residues 580-592 and 603-629; these read RFPF…NQPS and KPTS…SPSV.

The protein belongs to the protein kinase superfamily. Ser/Thr protein kinase family. In terms of assembly, interacts with sel-10. Probably ubiquitinated by the SCF(sel-10) and SCF(lin-23) E3 ubiquitin ligase complexes, leading to its proteasomal degradation.

The protein localises to the cytoplasm. The protein resides in the cytoskeleton. Its subcellular location is the microtubule organizing center. It is found in the centrosome. It localises to the centriole. It carries out the reaction L-seryl-[protein] + ATP = O-phospho-L-seryl-[protein] + ADP + H(+). The enzyme catalyses L-threonyl-[protein] + ATP = O-phospho-L-threonyl-[protein] + ADP + H(+). Its function is as follows. Protein kinase that plays a central role in centrosome duplication, control of centrosome size, spindle formation and nuclear envelope breakdown during cell divisions. Paternal copy is required to regulate synthesis of daughter centrioles prior to fertilization. Maternal copy regulates centrosome duplication during later cell cycles. Functions upstream of sas-5 and sas-6, and is required for their localization to the centrosome. Its role in nuclear envelope breakdown is mediated by the spindly-like protein spdl-1 and the RZZ complex, which in turn recruits the spindle checkpoint proteins mdf-1 and mdf-2, dynein and dynactin to unattached kinetochores. This is Probable serine/threonine-protein kinase zyg-1 from Caenorhabditis elegans.